The following is a 613-amino-acid chain: Epsin-2 (613 aa).

The ENTH domain occupies 11 to 143 (NMMKGYSSTQ…NDEERLREER (133 aa)). Disordered stretches follow at residues 140 to 208 (REER…DDED), 323 to 351 (TAAN…PFSM), and 356 to 375 (RQKQ…EARQ). Residues 148–167 (RNRRANRAARPRPRRQRTRS) are compositionally biased toward basic residues. Phosphothreonine is present on T165. Residue S167 is modified to Phosphoserine. UIM domains are found at residues 175–194 (SYQD…AQED) and 206–225 (DEDP…EELK). Over residues 179 to 188 (DLEKALEESR) the composition is skewed to basic and acidic residues. Residues 323–339 (TAANMQQQQQQPADFQQ) show a composition bias toward low complexity. Residues 340–350 (PLPTGSNNPFS) are compositionally biased toward polar residues. K426 is covalently cross-linked (Glycyl lysine isopeptide (Lys-Gly) (interchain with G-Cter in ubiquitin)). Residue T430 is modified to Phosphothreonine. S434 carries the phosphoserine modification. Phosphothreonine occurs at positions 450, 468, and 470. Positions 471-512 (GTFINSQGTGYKQVTNEPKNNPFLSNQYTGLPSTNIVPTQTG) are enriched in polar residues. A disordered region spans residues 471–613 (GTFINSQGTG…PDQGVSLIDL (143 aa)). Positions 526 to 600 (SPQQNPTGIS…QQQQQQQQQQ (75 aa)) are enriched in low complexity.

It belongs to the epsin family. Post-translationally, phosphorylated by PRK1.

It localises to the cytoplasm. It is found in the membrane. Binds to membranes enriched in phosphatidylinositol 3,5-bisphosphate (PtdIns(3,5)P2) and phosphatidylinositol 4,5-bisphosphate (PtdIns(4,5)P2). Required for endocytosis and localization of actin. This is Epsin-2 (ENT2) from Saccharomyces cerevisiae (strain ATCC 204508 / S288c) (Baker's yeast).